Here is a 200-residue protein sequence, read N- to C-terminus: Charged multivesicular body protein 6-B (200 aa).

The N-myristoyl glycine moiety is linked to residue Gly2. A coiled-coil region spans residues 9–102 (RRSRVTEQDK…FAQIEMKVIE (94 aa)). Residues 165–200 (QEDLELPEAPSEPLSDTVPEKQAVKNRPKPQLVAAS) form a disordered region. The Type-2 MIT-interacting motif motif lies at 168–179 (LELPEAPSEPLS).

Belongs to the SNF7 family. Probable core component of the endosomal sorting required for transport complex III (ESCRT-III). ESCRT-III components are thought to multimerize to form a flat lattice on the perimeter membrane of the endosome.

It is found in the endomembrane system. Its subcellular location is the late endosome membrane. Functionally, probable core component of the endosomal sorting required for transport complex III (ESCRT-III) which is involved in multivesicular bodies (MVBs) formation and sorting of endosomal cargo proteins into MVBs. MVBs contain intraluminal vesicles (ILVs) that are generated by invagination and scission from the limiting membrane of the endosome and mostly are delivered to lysosomes enabling degradation of membrane proteins, such as stimulated growth factor receptors, lysosomal enzymes and lipids. In the ESCRT-III complex, it probably serves as an acceptor for the ESCRT-II complex on endosomal membranes. In Xenopus laevis (African clawed frog), this protein is Charged multivesicular body protein 6-B (chmp6-b).